The chain runs to 82 residues: Exodeoxyribonuclease 7 small subunit (82 aa).

Belongs to the XseB family. Heterooligomer composed of large and small subunits.

The protein localises to the cytoplasm. The catalysed reaction is Exonucleolytic cleavage in either 5'- to 3'- or 3'- to 5'-direction to yield nucleoside 5'-phosphates.. Functionally, bidirectionally degrades single-stranded DNA into large acid-insoluble oligonucleotides, which are then degraded further into small acid-soluble oligonucleotides. The polypeptide is Exodeoxyribonuclease 7 small subunit (Colwellia psychrerythraea (strain 34H / ATCC BAA-681) (Vibrio psychroerythus)).